We begin with the raw amino-acid sequence, 450 residues long: UDP-N-acetylmuramoylalanine--D-glutamate ligase (450 aa).

Residue 119-125 participates in ATP binding; it reads GSNGKTT.

It belongs to the MurCDEF family.

Its subcellular location is the cytoplasm. The catalysed reaction is UDP-N-acetyl-alpha-D-muramoyl-L-alanine + D-glutamate + ATP = UDP-N-acetyl-alpha-D-muramoyl-L-alanyl-D-glutamate + ADP + phosphate + H(+). It participates in cell wall biogenesis; peptidoglycan biosynthesis. Its function is as follows. Cell wall formation. Catalyzes the addition of glutamate to the nucleotide precursor UDP-N-acetylmuramoyl-L-alanine (UMA). In Streptococcus pneumoniae (strain Hungary19A-6), this protein is UDP-N-acetylmuramoylalanine--D-glutamate ligase.